We begin with the raw amino-acid sequence, 504 residues long: ATP synthase subunit alpha (504 aa).

169–176 (GDRQTGKT) is a binding site for ATP.

Belongs to the ATPase alpha/beta chains family. F-type ATPases have 2 components, CF(1) - the catalytic core - and CF(0) - the membrane proton channel. CF(1) has five subunits: alpha(3), beta(3), gamma(1), delta(1), epsilon(1). CF(0) has three main subunits: a(1), b(2) and c(9-12). The alpha and beta chains form an alternating ring which encloses part of the gamma chain. CF(1) is attached to CF(0) by a central stalk formed by the gamma and epsilon chains, while a peripheral stalk is formed by the delta and b chains.

It is found in the cell membrane. The enzyme catalyses ATP + H2O + 4 H(+)(in) = ADP + phosphate + 5 H(+)(out). Functionally, produces ATP from ADP in the presence of a proton gradient across the membrane. The alpha chain is a regulatory subunit. The sequence is that of ATP synthase subunit alpha from Clostridium botulinum (strain Langeland / NCTC 10281 / Type F).